The chain runs to 132 residues: ATP synthase epsilon chain (132 aa).

It belongs to the ATPase epsilon chain family. As to quaternary structure, F-type ATPases have 2 components, CF(1) - the catalytic core - and CF(0) - the membrane proton channel. CF(1) has five subunits: alpha(3), beta(3), gamma(1), delta(1), epsilon(1). CF(0) has three main subunits: a, b and c.

Its subcellular location is the cell inner membrane. In terms of biological role, produces ATP from ADP in the presence of a proton gradient across the membrane. The polypeptide is ATP synthase epsilon chain (Anaeromyxobacter sp. (strain K)).